The following is an 80-amino-acid chain: Small ribosomal subunit protein bS18 (80 aa).

The protein belongs to the bacterial ribosomal protein bS18 family. As to quaternary structure, part of the 30S ribosomal subunit. Forms a tight heterodimer with protein bS6.

Binds as a heterodimer with protein bS6 to the central domain of the 16S rRNA, where it helps stabilize the platform of the 30S subunit. In Staphylococcus carnosus (strain TM300), this protein is Small ribosomal subunit protein bS18.